Consider the following 190-residue polypeptide: Dynein axonemal light chain 1 (190 aa).

Alanine 2 bears the N-acetylalanine mark. LRR repeat units lie at residues asparagine 49–lysine 70, asparagine 71–glycine 92, threonine 94–lysine 115, and lysine 116–alanine 137. Serine 56 carries the post-translational modification Phosphoserine. The LRRCT domain occupies asparagine 150–asparagine 190.

The protein belongs to the dynein light chain LC1-type family. In terms of assembly, interacts with ZMYND10 (via C-terminus). Interacts with DNAH5, a outer arm dynein heavy chain. Interacts with tubulin located within the A-tubule of the outer doublets in a ATP-independent manner.

The protein resides in the cytoplasm. Its subcellular location is the cytoskeleton. The protein localises to the cilium axoneme. Its function is as follows. Part of the multisubunit axonemal ATPase complexes that generate the force for cilia motility and govern beat frequency. Component of the outer arm dynein (ODA). May be involved in a mechanosensory feedback mechanism controlling ODA activity based on external conformational cues by tethering the outer arm dynein heavy chain (DNAH5) to the microtubule within the axoneme. Important for ciliary function in the airways and for the function of the cilia that produce the nodal flow essential for the determination of the left-right asymmetry. This chain is Dynein axonemal light chain 1 (DNAL1), found in Bos taurus (Bovine).